A 124-amino-acid chain; its full sequence is Holo-[acyl-carrier-protein] synthase (124 aa).

Residues Asp-7 and Glu-55 each coordinate Mg(2+).

The protein belongs to the P-Pant transferase superfamily. AcpS family. The cofactor is Mg(2+).

It is found in the cytoplasm. The catalysed reaction is apo-[ACP] + CoA = holo-[ACP] + adenosine 3',5'-bisphosphate + H(+). Functionally, transfers the 4'-phosphopantetheine moiety from coenzyme A to a Ser of acyl-carrier-protein. The chain is Holo-[acyl-carrier-protein] synthase from Borreliella afzelii (strain PKo) (Borrelia afzelii).